The following is a 164-amino-acid chain: ATP synthase subunit b 1 (164 aa).

The chain crosses the membrane as a helical span at residues 4 to 24; the sequence is MELAELWVAVAFFVFVGILLY.

The protein belongs to the ATPase B chain family. F-type ATPases have 2 components, F(1) - the catalytic core - and F(0) - the membrane proton channel. F(1) has five subunits: alpha(3), beta(3), gamma(1), delta(1), epsilon(1). F(0) has three main subunits: a(1), b(2) and c(10-14). The alpha and beta chains form an alternating ring which encloses part of the gamma chain. F(1) is attached to F(0) by a central stalk formed by the gamma and epsilon chains, while a peripheral stalk is formed by the delta and b chains.

It localises to the cell inner membrane. Its function is as follows. F(1)F(0) ATP synthase produces ATP from ADP in the presence of a proton or sodium gradient. F-type ATPases consist of two structural domains, F(1) containing the extramembraneous catalytic core and F(0) containing the membrane proton channel, linked together by a central stalk and a peripheral stalk. During catalysis, ATP synthesis in the catalytic domain of F(1) is coupled via a rotary mechanism of the central stalk subunits to proton translocation. Functionally, component of the F(0) channel, it forms part of the peripheral stalk, linking F(1) to F(0). The polypeptide is ATP synthase subunit b 1 (Azorhizobium caulinodans (strain ATCC 43989 / DSM 5975 / JCM 20966 / LMG 6465 / NBRC 14845 / NCIMB 13405 / ORS 571)).